Here is a 310-residue protein sequence, read N- to C-terminus: MSKKIIDEVIDILEDKKYTYTMIEYPEHNRKSVDIVLNSKEPTLIRVSEDKITKEEISDLKKIAVSTLTASLVVTNEEEEDIVSVKADNVFAISPEGFKKVINGEKIFLYRTRGGIFIKIRNYILKHKREEMGYSIGDVAKFLGVSRKAIYDYEKGDSDVSLEVAEKLIDLFGDDIIGDVIWDSIKSKKEILEEGVAEFSPENFKAKLIYKLKESGLNALSLKLTAADLIVKDSDNNRYLVTIENKDYNKSMKKFYEAKKLASYTKSELVIIIRTSKMLKECEDLGYKTYEENDIHSLIDEIKGSNGRQG.

Positions 125–180 constitute an HTH cro/C1-type domain; it reads LKHKREEMGYSIGDVAKFLGVSRKAIYDYEKGDSDVSLEVAEKLIDLFGDDIIGDV. Positions 136-155 form a DNA-binding region, H-T-H motif; that stretch reads IGDVAKFLGVSRKAIYDYEK.

This Saccharolobus solfataricus (strain ATCC 35092 / DSM 1617 / JCM 11322 / P2) (Sulfolobus solfataricus) protein is Putative HTH-type transcriptional regulatory protein SSO0942.